Reading from the N-terminus, the 722-residue chain is Exocyst complex component 3-like protein 4 (722 aa).

2 disordered regions span residues 1–53 and 92–131; these read MPSP…LGSL and NDGP…KPEA. The span at 34-46 shows a compositional bias: basic and acidic residues; that stretch reads SRKEPNAHRKDGT. Phosphoserine is present on Ser52. The segment covering 113 to 122 has biased composition (polar residues); it reads GVSQQASTGA. Ser513 is modified (phosphoserine).

It belongs to the SEC6 family.

The protein is Exocyst complex component 3-like protein 4 (EXOC3L4) of Homo sapiens (Human).